Reading from the N-terminus, the 78-residue chain is Large ribosomal subunit protein bL28 (78 aa).

Positions 1 to 28 (MSAICQVTGRQPGYGKSVSHSHRRTSRR) are disordered.

The protein belongs to the bacterial ribosomal protein bL28 family.

This chain is Large ribosomal subunit protein bL28, found in Corynebacterium diphtheriae (strain ATCC 700971 / NCTC 13129 / Biotype gravis).